We begin with the raw amino-acid sequence, 129 residues long: Type II secretion system protein I (129 aa).

A propeptide spans 1 to 6 (MKRARG) (leader sequence). Phe7 is modified (N-methylphenylalanine). A helical transmembrane segment spans residues 7-27 (FTLLEVLVALAIFAMVAASVL).

It belongs to the GSP I family. Type II secretion is composed of four main components: the outer membrane complex, the inner membrane complex, the cytoplasmic secretion ATPase and the periplasm-spanning pseudopilus. Forms the tip of the type II pseudopilus by interacting with XcpU, XcpW and XcpX. Interacts with core component XcpT. Cleaved by prepilin peptidase. Post-translationally, methylated by prepilin peptidase at the amino group of the N-terminal phenylalanine once the leader sequence is cleaved by prepilin peptidase.

It localises to the cell inner membrane. Functionally, component of the type II secretion system required for the energy-dependent secretion of extracellular factors such as proteases and toxins from the periplasm. Part of the pseudopilus tip complex that is critical for the recognition and binding of secretion substrates. Type II pseudopilus confers increased bacterial adhesive capabilities. This Pseudomonas aeruginosa (strain ATCC 15692 / DSM 22644 / CIP 104116 / JCM 14847 / LMG 12228 / 1C / PRS 101 / PAO1) protein is Type II secretion system protein I (xcpV).